We begin with the raw amino-acid sequence, 255 residues long: 4-diphosphocytidyl-2-C-methyl-D-erythritol kinase (255 aa).

Lysine 6 is an active-site residue. 95–105 (PVCAGLGGGSS) serves as a coordination point for ATP. Aspartate 137 is a catalytic residue.

Belongs to the GHMP kinase family. IspE subfamily.

It carries out the reaction 4-CDP-2-C-methyl-D-erythritol + ATP = 4-CDP-2-C-methyl-D-erythritol 2-phosphate + ADP + H(+). It participates in isoprenoid biosynthesis; isopentenyl diphosphate biosynthesis via DXP pathway; isopentenyl diphosphate from 1-deoxy-D-xylulose 5-phosphate: step 3/6. Functionally, catalyzes the phosphorylation of the position 2 hydroxy group of 4-diphosphocytidyl-2C-methyl-D-erythritol. This is 4-diphosphocytidyl-2-C-methyl-D-erythritol kinase from Campylobacter jejuni subsp. jejuni serotype O:6 (strain 81116 / NCTC 11828).